The sequence spans 532 residues: Cytochrome P450 monooxygenase pgmC (532 aa).

The helical transmembrane segment at 15–32 (ISTLAVLIGFIALLTAWL) threads the bilayer. Cysteine 438 provides a ligand contact to heme.

It belongs to the cytochrome P450 family. Heme is required as a cofactor.

It is found in the membrane. Its pathway is pigment biosynthesis. It functions in the pathway secondary metabolite biosynthesis. Functionally, cytochrome P450 monooxygenase; part of the gene cluster that mediates the biosynthesis of pleosporalin A, ascomycone A, as well as a third cryptic naphthoquinone derived pigment, all responsible for the coloration of conidia. Involved in the oxidation of fusarubinaldehyde at C-9. PgmC has low substrate-specificity and is also able to use the pgmA product 3-acetonyl-1,6,8-trihydroxy-2-naphthaldehyde as a substrate. The pathway begins with the biosynthesis of the cyclized heptaketide 3-acetonyl-1,6,8-trihydroxy-2-naphthaldehyde by the NR-PKS pgmA. The C-6 hydroxyl group is further methylated by the O-methyltransferase pgmB to yield fusarubinaldehyde which is in turn oxidized by the cytochrome P450 monooxygenase pgmC at C-9. The C-1 hydroxyl group is then methylated spontaneously. Although pgmE, pgmD and pgmH are essential for the production of pleosporalin A, it is not the case for the 2 other final products and it remains difficult to assign a specific function to each enzyme. PgmF and pgmG seem not to be involved in pigment biosynthesis although they were regulated by the cluster-specific transcription factor pgmR. The protein is Cytochrome P450 monooxygenase pgmC of Aspergillus terreus (strain NIH 2624 / FGSC A1156).